Consider the following 355-residue polypeptide: S-adenosylmethionine:tRNA ribosyltransferase-isomerase (355 aa).

Belongs to the QueA family. In terms of assembly, monomer.

Its subcellular location is the cytoplasm. It catalyses the reaction 7-aminomethyl-7-carbaguanosine(34) in tRNA + S-adenosyl-L-methionine = epoxyqueuosine(34) in tRNA + adenine + L-methionine + 2 H(+). Its pathway is tRNA modification; tRNA-queuosine biosynthesis. Its function is as follows. Transfers and isomerizes the ribose moiety from AdoMet to the 7-aminomethyl group of 7-deazaguanine (preQ1-tRNA) to give epoxyqueuosine (oQ-tRNA). In Jannaschia sp. (strain CCS1), this protein is S-adenosylmethionine:tRNA ribosyltransferase-isomerase.